A 286-amino-acid polypeptide reads, in one-letter code: L-cysteine S-thiosulfotransferase subunit SoxA (286 aa).

The first 27 residues, 1–27 (MKKTIQRGLFTGALVLMTAMTAKPANA), serve as a signal peptide directing secretion. A disulfide bridge connects residues C106 and C137. Residues 180-286 (DAYMKGKKFF…LKYNGPASRK (107 aa)) form the Cytochrome c domain. Heme is bound by residues C200 and H204. A substrate-binding site is contributed by R243. Position 247 (C247) interacts with heme. The Cysteine persulfide intermediate role is filled by C247.

Belongs to the SoxA family. Heterodimer of SoxA and SoxX. The SoxAX complex interacts with CT1020, SoxAX-binding protein SaxB (SoxK); this interaction seems to be between SoxA and CT1020 and stimulates catalytic activity of the SoxAX complex. Heme serves as cofactor. Post-translationally, cysteine persulfide at Cys-247.

It localises to the periplasm. It carries out the reaction L-cysteinyl-[SoxY protein] + thiosulfate + 2 Fe(III)-[cytochrome c] = S-sulfosulfanyl-L-cysteinyl-[SoxY protein] + 2 Fe(II)-[cytochrome c] + 2 H(+). The catalysed reaction is S-sulfanyl-L-cysteinyl-[SoxY protein] + thiosulfate + 2 Fe(III)-[cytochrome c] = S-(2-sulfodisulfanyl)-L-cysteinyl-[SoxY protein] + 2 Fe(II)-[cytochrome c] + 2 H(+). Functionally, C-type monoheme cytochrome, which is part of the SoxAX cytochrome complex involved in sulfur oxidation. The SoxAX complex catalyzes the formation of a heterodisulfide bond between the conserved cysteine residue on a sulfur carrier SoxYZ complex subunit SoxY and thiosulfate or other inorganic sulfur substrates. This leads to the liberation of two electrons, which may be transferred from the SoxAX complex to another cytochrome c and which then may be used for reductive CO(2) fixation. The protein is L-cysteine S-thiosulfotransferase subunit SoxA of Chlorobaculum tepidum (strain ATCC 49652 / DSM 12025 / NBRC 103806 / TLS) (Chlorobium tepidum).